A 254-amino-acid chain; its full sequence is MPRYKLVVEYDGTAFAGWQRQAADRTVQQALEEAIERFVNRPVRVHCAGRTDAGVHASHQVVHLDLDREWRTDTVRDATNAHLRPEPVSVLSAARVGPDFDARHSALKRHYRYRILNRRSPPALARGYVWHVPWALDAAAMHAAAQTLLGRHDFSAFRAAECQASSPLRTLDQLDVERRGDEILVATSARSFLHHQVRGMVGTLMLAGSGRLDTAGVRAVLDSRDRARCGPLAPAAGLTLTGVDYPEAALSAPG.

The Nucleophile role is filled by D52. Position 111 (Y111) interacts with substrate.

The protein belongs to the tRNA pseudouridine synthase TruA family. In terms of assembly, homodimer.

It carries out the reaction uridine(38/39/40) in tRNA = pseudouridine(38/39/40) in tRNA. Formation of pseudouridine at positions 38, 39 and 40 in the anticodon stem and loop of transfer RNAs. This chain is tRNA pseudouridine synthase A, found in Methylobacterium nodulans (strain LMG 21967 / CNCM I-2342 / ORS 2060).